The chain runs to 315 residues: Ribosomal large subunit pseudouridine synthase D (315 aa).

An S4 RNA-binding domain is found at Lys-18–Ile-87. Residue Asp-139 is part of the active site.

This sequence belongs to the pseudouridine synthase RluA family.

The protein localises to the cytoplasm. The enzyme catalyses uridine(1911/1915/1917) in 23S rRNA = pseudouridine(1911/1915/1917) in 23S rRNA. Its function is as follows. Responsible for synthesis of pseudouridine from uracil at positions 1911, 1915 and 1917 in 23S ribosomal RNA. The chain is Ribosomal large subunit pseudouridine synthase D (rluD) from Buchnera aphidicola subsp. Schizaphis graminum (strain Sg).